A 396-amino-acid polypeptide reads, in one-letter code: 1-deoxy-D-xylulose 5-phosphate reductoisomerase (396 aa).

NADPH-binding residues include threonine 10, glycine 11, serine 12, isoleucine 13, glycine 36, lysine 37, asparagine 38, and asparagine 124. A 1-deoxy-D-xylulose 5-phosphate-binding site is contributed by lysine 125. Glutamate 126 is an NADPH binding site. Aspartate 150 lines the Mn(2+) pocket. 1-deoxy-D-xylulose 5-phosphate contacts are provided by serine 151, glutamate 152, serine 186, and histidine 209. Mn(2+) is bound at residue glutamate 152. Glycine 215 provides a ligand contact to NADPH. Serine 222, asparagine 227, lysine 228, and glutamate 231 together coordinate 1-deoxy-D-xylulose 5-phosphate. Residue glutamate 231 coordinates Mn(2+).

This sequence belongs to the DXR family. The cofactor is Mg(2+). Mn(2+) is required as a cofactor.

The enzyme catalyses 2-C-methyl-D-erythritol 4-phosphate + NADP(+) = 1-deoxy-D-xylulose 5-phosphate + NADPH + H(+). The protein operates within isoprenoid biosynthesis; isopentenyl diphosphate biosynthesis via DXP pathway; isopentenyl diphosphate from 1-deoxy-D-xylulose 5-phosphate: step 1/6. In terms of biological role, catalyzes the NADPH-dependent rearrangement and reduction of 1-deoxy-D-xylulose-5-phosphate (DXP) to 2-C-methyl-D-erythritol 4-phosphate (MEP). This Actinobacillus pleuropneumoniae serotype 5b (strain L20) protein is 1-deoxy-D-xylulose 5-phosphate reductoisomerase.